Here is a 416-residue protein sequence, read N- to C-terminus: Gamma-glutamyl phosphate reductase (416 aa).

The protein belongs to the gamma-glutamyl phosphate reductase family.

Its subcellular location is the cytoplasm. It catalyses the reaction L-glutamate 5-semialdehyde + phosphate + NADP(+) = L-glutamyl 5-phosphate + NADPH + H(+). It functions in the pathway amino-acid biosynthesis; L-proline biosynthesis; L-glutamate 5-semialdehyde from L-glutamate: step 2/2. Its function is as follows. Catalyzes the NADPH-dependent reduction of L-glutamate 5-phosphate into L-glutamate 5-semialdehyde and phosphate. The product spontaneously undergoes cyclization to form 1-pyrroline-5-carboxylate. This Streptococcus pyogenes serotype M6 (strain ATCC BAA-946 / MGAS10394) protein is Gamma-glutamyl phosphate reductase.